We begin with the raw amino-acid sequence, 409 residues long: Pleckstrin homology domain-containing family O member 1 (409 aa).

Residues 1 to 24 form a disordered region; it reads MMKKNNSAKRGPQDGNQQPAPPEK. Positions 21-132 constitute a PH domain; the sequence is PPEKVGWVRK…WINALNSAIT (112 aa). Residues 133–193 form an interaction with capping proteins (CPs) region; sequence RAKNRILDEV…MLTLDLIQEE (61 aa). The tract at residues 136 to 308 is interaction with ATM, CKIP, IFP35 and NMI; it reads NRILDEVTVE…LPNPGQLSRI (173 aa). A disordered region spans residues 218-267; sequence LAGSRRRADSDRIQPSADRASSLSRPWEKTDKGATYTPQAPKKLTPTEKG. Phosphoserine occurs at positions 227 and 271. Positions 308–409 are negative regulator of AP-1 activity; sequence IQDLVARKLE…PHSQYRKSLM (102 aa). 2 disordered regions span residues 325–350 and 390–409; these read EVQG…ESEQ and TPDS…KSLM. The segment covering 331–340 has biased composition (basic and acidic residues); sequence DGKRKAKDPP. Ser342 is modified (phosphoserine). Over residues 390-402 the composition is skewed to polar residues; the sequence is TPDSHLRQTTPHS.

In terms of assembly, heterodimer or homodimer. Interacts with CK2 and actin capping subunits (capping protein CP-alpha and CP-beta). CKIP1 and CK2 together inhibit the activity of actin capping protein at the barbed ends of actin filaments. Interacts with ATM, IFP35, JUN, JUND, NMI and PI3K. Interacts with AKT1, AKT2 and AKT3 (each isozyme of PKB), PtdIns(3,5)P2, PtdIns(4,5)P2 and PtdIns(3,4,5)P2. In terms of processing, C-terminal fragments could be released during apoptosis via caspase-3-dependent cleavage. As to expression, abundantly expressed in skeletal muscle and heart, moderately in kidney, liver, brain and placenta and sparingly in the pancreas and lung. Easily detectable in cell lines such as MOLT-4, HEK293 and Jurkat.

Its subcellular location is the cell membrane. The protein resides in the nucleus. It is found in the cytoplasm. Plays a role in the regulation of the actin cytoskeleton through its interactions with actin capping protein (CP). May function to target CK2 to the plasma membrane thereby serving as an adapter to facilitate the phosphorylation of CP by protein kinase 2 (CK2). Appears to target ATM to the plasma membrane. Appears to also inhibit tumor cell growth by inhibiting AKT-mediated cell-survival. Also implicated in PI3K-regulated muscle differentiation, the regulation of AP-1 activity (plasma membrane bound AP-1 regulator that translocates to the nucleus) and the promotion of apoptosis induced by tumor necrosis factor TNF. When bound to PKB, it inhibits it probably by decreasing PKB level of phosphorylation. The polypeptide is Pleckstrin homology domain-containing family O member 1 (PLEKHO1) (Homo sapiens (Human)).